The following is a 134-amino-acid chain: Large ribosomal subunit protein bL20 (134 aa).

Belongs to the bacterial ribosomal protein bL20 family.

Its function is as follows. Binds directly to 23S ribosomal RNA and is necessary for the in vitro assembly process of the 50S ribosomal subunit. It is not involved in the protein synthesizing functions of that subunit. This Rhizobium meliloti (strain 1021) (Ensifer meliloti) protein is Large ribosomal subunit protein bL20.